Reading from the N-terminus, the 190-residue chain is Holliday junction branch migration complex subunit RuvA (190 aa).

Residues 1–63 form a domain I region; the sequence is MLDFIKGKVI…EESIEIYGFL (63 aa). The domain II stretch occupies residues 64 to 139; sequence ESSERDLFEE…ILPSLQYEKD (76 aa). Aspartate 139 is a region of interest (flexible linker). The domain III stretch occupies residues 139–190; sequence DQKYDDILSALLNLGYKRLEAKEVLDKIYNNEKDEATIIRESLSILAGKDGK.

This sequence belongs to the RuvA family. Homotetramer. Forms an RuvA(8)-RuvB(12)-Holliday junction (HJ) complex. HJ DNA is sandwiched between 2 RuvA tetramers; dsDNA enters through RuvA and exits via RuvB. An RuvB hexamer assembles on each DNA strand where it exits the tetramer. Each RuvB hexamer is contacted by two RuvA subunits (via domain III) on 2 adjacent RuvB subunits; this complex drives branch migration. In the full resolvosome a probable DNA-RuvA(4)-RuvB(12)-RuvC(2) complex forms which resolves the HJ.

The protein localises to the cytoplasm. Functionally, the RuvA-RuvB-RuvC complex processes Holliday junction (HJ) DNA during genetic recombination and DNA repair, while the RuvA-RuvB complex plays an important role in the rescue of blocked DNA replication forks via replication fork reversal (RFR). RuvA specifically binds to HJ cruciform DNA, conferring on it an open structure. The RuvB hexamer acts as an ATP-dependent pump, pulling dsDNA into and through the RuvAB complex. HJ branch migration allows RuvC to scan DNA until it finds its consensus sequence, where it cleaves and resolves the cruciform DNA. The chain is Holliday junction branch migration complex subunit RuvA from Thermodesulfovibrio yellowstonii (strain ATCC 51303 / DSM 11347 / YP87).